The sequence spans 252 residues: Phosphatidylserine decarboxylase proenzyme (252 aa).

Residue Ser-211 is the Schiff-base intermediate with substrate; via pyruvic acid of the active site. Position 211 is a pyruvic acid (Ser); by autocatalysis (Ser-211).

The protein belongs to the phosphatidylserine decarboxylase family. PSD-A subfamily. Heterodimer of a large membrane-associated beta subunit and a small pyruvoyl-containing alpha subunit. The cofactor is pyruvate. Post-translationally, is synthesized initially as an inactive proenzyme. Formation of the active enzyme involves a self-maturation process in which the active site pyruvoyl group is generated from an internal serine residue via an autocatalytic post-translational modification. Two non-identical subunits are generated from the proenzyme in this reaction, and the pyruvate is formed at the N-terminus of the alpha chain, which is derived from the carboxyl end of the proenzyme. The post-translation cleavage follows an unusual pathway, termed non-hydrolytic serinolysis, in which the side chain hydroxyl group of the serine supplies its oxygen atom to form the C-terminus of the beta chain, while the remainder of the serine residue undergoes an oxidative deamination to produce ammonia and the pyruvoyl prosthetic group on the alpha chain.

The protein resides in the cell membrane. The catalysed reaction is a 1,2-diacyl-sn-glycero-3-phospho-L-serine + H(+) = a 1,2-diacyl-sn-glycero-3-phosphoethanolamine + CO2. It functions in the pathway phospholipid metabolism; phosphatidylethanolamine biosynthesis; phosphatidylethanolamine from CDP-diacylglycerol: step 2/2. Its function is as follows. Catalyzes the formation of phosphatidylethanolamine (PtdEtn) from phosphatidylserine (PtdSer). The chain is Phosphatidylserine decarboxylase proenzyme from Novosphingobium aromaticivorans (strain ATCC 700278 / DSM 12444 / CCUG 56034 / CIP 105152 / NBRC 16084 / F199).